The following is a 261-amino-acid chain: Adenosylcobinamide-GDP ribazoletransferase (261 aa).

A run of 7 helical transmembrane segments spans residues 9–29, 41–61, 64–84, 114–134, 141–161, 196–216, and 235–255; these read LELF…VSLP, YFAL…SLAT, FSTN…TGAF, IGTY…LLLT, SLVP…ASLI, ATLL…SLIF, and CLGA…LAFL.

Belongs to the CobS family. Requires Mg(2+) as cofactor.

It is found in the cell inner membrane. It carries out the reaction alpha-ribazole + adenosylcob(III)inamide-GDP = adenosylcob(III)alamin + GMP + H(+). The enzyme catalyses alpha-ribazole 5'-phosphate + adenosylcob(III)inamide-GDP = adenosylcob(III)alamin 5'-phosphate + GMP + H(+). Its pathway is cofactor biosynthesis; adenosylcobalamin biosynthesis; adenosylcobalamin from cob(II)yrinate a,c-diamide: step 7/7. Functionally, joins adenosylcobinamide-GDP and alpha-ribazole to generate adenosylcobalamin (Ado-cobalamin). Also synthesizes adenosylcobalamin 5'-phosphate from adenosylcobinamide-GDP and alpha-ribazole 5'-phosphate. This is Adenosylcobinamide-GDP ribazoletransferase from Vibrio cholerae serotype O1 (strain ATCC 39541 / Classical Ogawa 395 / O395).